The primary structure comprises 460 residues: UDP-N-acetylmuramoylalanine--D-glutamate ligase (460 aa).

115–121 (GTNGKTT) provides a ligand contact to ATP.

Belongs to the MurCDEF family.

It is found in the cytoplasm. The catalysed reaction is UDP-N-acetyl-alpha-D-muramoyl-L-alanine + D-glutamate + ATP = UDP-N-acetyl-alpha-D-muramoyl-L-alanyl-D-glutamate + ADP + phosphate + H(+). It participates in cell wall biogenesis; peptidoglycan biosynthesis. Its function is as follows. Cell wall formation. Catalyzes the addition of glutamate to the nucleotide precursor UDP-N-acetylmuramoyl-L-alanine (UMA). The protein is UDP-N-acetylmuramoylalanine--D-glutamate ligase of Salinibacter ruber (strain DSM 13855 / M31).